Consider the following 215-residue polypeptide: Charged multivesicular body protein 4 (215 aa).

Residues Lys10–Asn173 are a coiled coil.

This sequence belongs to the SNF7 family. As to quaternary structure, probable core component of the endosomal sorting required for transport complex III (ESCRT-III). ESCRT-III components are thought to multimerize to form a flat lattice on the perimeter membrane of the endosome.

Its subcellular location is the cytoplasmic vesicle membrane. It is found in the late endosome membrane. Its function is as follows. Probable core component of the endosomal sorting required for transport complex III (ESCRT-III) which is involved in multivesicular bodies (MVBs) formation and sorting of endosomal cargo proteins into MVBs. MVBs contain intraluminal vesicles (ILVs) that are generated by invagination and scission from the limiting membrane of the endosome and mostly are delivered to lysosomes enabling degradation of membrane proteins. This Dictyostelium discoideum (Social amoeba) protein is Charged multivesicular body protein 4 (chmp4).